Consider the following 166-residue polypeptide: Large ribosomal subunit protein uL10 (166 aa).

Belongs to the universal ribosomal protein uL10 family. As to quaternary structure, part of the ribosomal stalk of the 50S ribosomal subunit. The N-terminus interacts with L11 and the large rRNA to form the base of the stalk. The C-terminus forms an elongated spine to which L12 dimers bind in a sequential fashion forming a multimeric L10(L12)X complex.

In terms of biological role, forms part of the ribosomal stalk, playing a central role in the interaction of the ribosome with GTP-bound translation factors. In Enterococcus faecalis (strain ATCC 700802 / V583), this protein is Large ribosomal subunit protein uL10.